The chain runs to 585 residues: Aspartate--tRNA ligase (585 aa).

An L-aspartate-binding site is contributed by Glu-173. An aspartate region spans residues 197–200; that stretch reads QTLK. Position 219 (Arg-219) interacts with L-aspartate. Residues 219 to 221 and Gln-228 each bind ATP; that span reads RDE. His-446 is an L-aspartate binding site. Residue Glu-480 participates in ATP binding. Arg-487 provides a ligand contact to L-aspartate. Residue 532 to 535 participates in ATP binding; that stretch reads GLDR.

This sequence belongs to the class-II aminoacyl-tRNA synthetase family. Type 1 subfamily. Homodimer.

It is found in the cytoplasm. The catalysed reaction is tRNA(Asp) + L-aspartate + ATP = L-aspartyl-tRNA(Asp) + AMP + diphosphate. In terms of biological role, catalyzes the attachment of L-aspartate to tRNA(Asp) in a two-step reaction: L-aspartate is first activated by ATP to form Asp-AMP and then transferred to the acceptor end of tRNA(Asp). This chain is Aspartate--tRNA ligase, found in Bacteroides fragilis (strain ATCC 25285 / DSM 2151 / CCUG 4856 / JCM 11019 / LMG 10263 / NCTC 9343 / Onslow / VPI 2553 / EN-2).